The following is a 185-amino-acid chain: Elongation factor P (185 aa).

Belongs to the elongation factor P family.

It is found in the cytoplasm. It participates in protein biosynthesis; polypeptide chain elongation. In terms of biological role, involved in peptide bond synthesis. Stimulates efficient translation and peptide-bond synthesis on native or reconstituted 70S ribosomes in vitro. Probably functions indirectly by altering the affinity of the ribosome for aminoacyl-tRNA, thus increasing their reactivity as acceptors for peptidyl transferase. The protein is Elongation factor P of Tropheryma whipplei (strain TW08/27) (Whipple's bacillus).